We begin with the raw amino-acid sequence, 85 residues long: Beta-insect depressant toxin LqhIT2 (85 aa).

An N-terminal signal peptide occupies residues 1-21; sequence MKLLLLLIVSASMLIESLVNA. The region spanning 22-82 is the LCN-type CS-alpha/beta domain; sequence DGYIKRRDGC…TWKSETNTCG (61 aa). 4 disulfides stabilise this stretch: C31–C81, C35–C56, C42–C63, and C46–C65. At G82 the chain carries Glycine amide.

It belongs to the long (4 C-C) scorpion toxin superfamily. Sodium channel inhibitor family. Beta subfamily. Expressed by the venom gland.

It is found in the secreted. Functionally, depressant insect beta-toxins cause a transient contraction paralysis followed by a slow flaccid paralysis. They bind voltage-independently at site-4 of sodium channels (Nav) and shift the voltage of activation toward more negative potentials thereby affecting sodium channel activation and promoting spontaneous and repetitive firing. This toxin is active only on insects. The sequence is that of Beta-insect depressant toxin LqhIT2 from Leiurus hebraeus (Hebrew deathstalker scorpion).